Here is a 649-residue protein sequence, read N- to C-terminus: Threonine--tRNA ligase (649 aa).

Positions 1 to 63 constitute a TGS domain; the sequence is MSSIKITFPD…KEDGSIEIIT (63 aa). Residues 245-543 form a catalytic region; the sequence is DHRVIGNELD…LTEMYKGAFP (299 aa). Positions 339, 390, and 520 each coordinate Zn(2+).

Belongs to the class-II aminoacyl-tRNA synthetase family. As to quaternary structure, homodimer. It depends on Zn(2+) as a cofactor.

The protein resides in the cytoplasm. It catalyses the reaction tRNA(Thr) + L-threonine + ATP = L-threonyl-tRNA(Thr) + AMP + diphosphate + H(+). In terms of biological role, catalyzes the attachment of threonine to tRNA(Thr) in a two-step reaction: L-threonine is first activated by ATP to form Thr-AMP and then transferred to the acceptor end of tRNA(Thr). Also edits incorrectly charged L-seryl-tRNA(Thr). In Ligilactobacillus salivarius (strain UCC118) (Lactobacillus salivarius), this protein is Threonine--tRNA ligase.